The chain runs to 945 residues: Chaperone protein ClpD, chloroplastic (945 aa).

Residues 1–89 constitute a chloroplast transit peptide; that stretch reads MEVLSTSSPL…FERFTERAIR (89 aa). Repeat regions lie at residues 90–146 and 168–233; these read AIIF…WDEA and FSIS…LKGE. Residues 90-233 form the Clp R domain; the sequence is AIIFSQKEAK…AAALTRLKGE (144 aa). The interval 233–264 is disordered; sequence EIAKDGREPSSSSKGSFESPPSGRIAGSGPGG. A compositionally biased stretch (low complexity) spans 241-255; that stretch reads PSSSSKGSFESPPSG. Residues 271-523 form an i region; that stretch reads LEQFCVDLTA…RARIEAFRKK (253 aa). 316 to 323 lines the ATP pocket; that stretch reads GEAGVGKT. The segment at 555-586 is disordered; that stretch reads SRQKQDDGDAISDESGELVEESSLPPAAGDDE. The span at 562 to 574 shows a compositional bias: acidic residues; that stretch reads GDAISDESGELVE. The II stretch occupies residues 590 to 781; it reads VGPDDIAAVA…LIIMTSNVGS (192 aa). 664–671 is a binding site for ATP; the sequence is GPTGVGKT.

This sequence belongs to the ClpA/ClpB family. ClpD subfamily. Homodimer and homohexamer. Hexamerization upon addition of ATP. Interacts with CLPT1. Stably associated with the import machinery. Requires Mg(2+) as cofactor. As to expression, expressed in stems and leaves.

It localises to the plastid. It is found in the chloroplast stroma. It carries out the reaction ATP + H2O = ADP + phosphate + H(+). Functionally, molecular chaperone that interact with a ClpP-like protease involved in degradation of denatured proteins in the chloroplast. The ATPase activity of CLPD is stimulated by CLPT1. Has no ADPase activity. Interacts with transit peptides with a positional preference. Localization of the signal sequence at the N-terminal end of a protein seems mandatory for interaction to take place. The protein is Chaperone protein ClpD, chloroplastic of Arabidopsis thaliana (Mouse-ear cress).